Consider the following 689-residue polypeptide: Histone-lysine N-methyltransferase MEDEA (689 aa).

Disordered regions lie at residues 1 to 20, 51 to 73, and 169 to 188; these read MEKENHEDDGEGLPPELNQI, HQSFDLNQPAAEDDNGGDNKSLL, and ELSSEEDEEDEEEDEEEIKK. Residues 1 to 109 are interaction with FIE; it reads MEKENHEDDG…DEDQDYALEE (109 aa). Positions 171-184 are enriched in acidic residues; it reads SSEEDEEDEEEDEE. Residues 339 to 389 enclose the SANT domain; that stretch reads NNTMWTPVEKDLYLKGIEIFGRNSCDVALNILRGLKTCLEIYNYMREQDQC. In terms of domain architecture, CXC spans 428-532; the sequence is RYPPALKKTT…TLGETPVQIQ (105 aa). Residues 544 to 659 enclose the SET domain; the sequence is KKILIGKSDV…EGEELFFDYC (116 aa). Positions 666–689 are disordered; sequence DWSRGREPRKTGASKRSKEARPAR.

This sequence belongs to the class V-like SAM-binding methyltransferase superfamily. Histone-lysine methyltransferase family. EZ subfamily. In terms of assembly, interacts directly with FIE via its N-terminal domain. These two proteins are probably indirectly associated with FIS2. In plants, PcG complexes are probably composed of a member of the EZ family (CLF or MEA), FIE, and a member of the VEFS family (FIS2, VRN2 or EMF2). Interacts with TAF13. In terms of tissue distribution, expressed in unpollinated siliques that contain maturing gametophytes. Not expressed at early stages of floral development during early megagametogenesis.

It is found in the nucleus. The catalysed reaction is L-lysyl(27)-[histone H3] + 3 S-adenosyl-L-methionine = N(6),N(6),N(6)-trimethyl-L-lysyl(27)-[histone H3] + 3 S-adenosyl-L-homocysteine + 3 H(+). In terms of biological role, polycomb group (PcG) protein. Catalytic subunit of some PcG multiprotein complex, which methylates 'Lys-27' of histone H3, leading to transcriptional repression of the affected target genes. Required to prevent the proliferation of the central cell of the female gametophyte by repressing target genes before fertilization. After fertilization, it probably also regulates the embryo and endosperm proliferation and anteroposterior organization during seed development. PcG proteins act by forming multiprotein complexes, which are required to maintain the transcriptionally repressive state of homeotic genes throughout development. PcG proteins are not required to initiate repression, but to maintain it during later stages of development. Interacts with the promoter and repress the transcription of genes such as PHE1 and PHE2, that are paternally active and maternally silenced genes. This chain is Histone-lysine N-methyltransferase MEDEA (MEA), found in Arabidopsis thaliana (Mouse-ear cress).